The chain runs to 336 residues: Isopentenyl-diphosphate delta-isomerase (336 aa).

5-6 (RK) is a substrate binding site. FMN-binding positions include 60 to 62 (AMT), Ser-90, and Asn-117. Gln-147 contacts substrate. Position 148 (Glu-148) interacts with Mg(2+). Residues Lys-179, Ser-204, Thr-209, 253 to 255 (GVR), and 274 to 275 (SR) contribute to the FMN site.

Belongs to the IPP isomerase type 2 family. Homooctamer. Dimer of tetramers. Requires FMN as cofactor. NADPH is required as a cofactor. The cofactor is Mg(2+).

Its subcellular location is the cytoplasm. It carries out the reaction isopentenyl diphosphate = dimethylallyl diphosphate. Its function is as follows. Involved in the biosynthesis of isoprenoids. Catalyzes the 1,3-allylic rearrangement of the homoallylic substrate isopentenyl (IPP) to its allylic isomer, dimethylallyl diphosphate (DMAPP). The protein is Isopentenyl-diphosphate delta-isomerase of Streptococcus pneumoniae (strain 70585).